The chain runs to 180 residues: Inner membrane-spanning protein YciB (180 aa).

Helical transmembrane passes span 4-24, 25-45, 52-72, 76-96, 118-138, and 150-170; these read LLSE…GGGI, QHAT…CYVI, LSII…ISGN, IKIK…MSGI, ITLS…NEVV, and FKVF…LPLL.

The protein belongs to the YciB family.

It is found in the cell inner membrane. Its function is as follows. Plays a role in cell envelope biogenesis, maintenance of cell envelope integrity and membrane homeostasis. The chain is Inner membrane-spanning protein YciB from Rickettsia massiliae (strain Mtu5).